A 103-amino-acid chain; its full sequence is Mitochondrial import inner membrane translocase subunit Tim10 B (103 aa).

A Twin CX3C motif motif is present at residues 28–52 (CFQRCVPSLHHRALDAEEEACLHSC). 2 disulfides stabilise this stretch: cysteine 28–cysteine 52 and cysteine 32–cysteine 48.

Belongs to the small Tim family. As to quaternary structure, component of the TIM22 complex, which core is composed of TIMM22, associated with TIMM10 (TIMM10A and/or TIMM10B), TIMM9, AGK and TIMM29. As to expression, ubiquitous, with highest expression in heart, kidney, liver and skeletal muscle.

The protein resides in the mitochondrion inner membrane. Its function is as follows. Component of the TIM22 complex, a complex that mediates the import and insertion of multi-pass transmembrane proteins into the mitochondrial inner membrane. The TIM22 complex forms a twin-pore translocase that uses the membrane potential as the external driving force. In the TIM22 complex, it may act as a docking point for the soluble 70 kDa complex that guides the target proteins in transit through the aqueous mitochondrial intermembrane space. The protein is Mitochondrial import inner membrane translocase subunit Tim10 B (TIMM10B) of Homo sapiens (Human).